Here is a 502-residue protein sequence, read N- to C-terminus: UPF0371 protein CLL_A2797 (502 aa).

This sequence belongs to the UPF0371 family.

The protein is UPF0371 protein CLL_A2797 of Clostridium botulinum (strain Eklund 17B / Type B).